The following is a 60-amino-acid chain: Large ribosomal subunit protein bL32 (60 aa).

Residues 1-23 (MAKHPVPKKKTSKARRDARRSHH) are compositionally biased toward basic residues. The disordered stretch occupies residues 1–30 (MAKHPVPKKKTSKARRDARRSHHALTPPTL).

As to quaternary structure, part of the 50S ribosomal subunit.

In terms of biological role, found on the solvent side of the large subunit. This chain is Large ribosomal subunit protein bL32 (rpmF), found in Thermus thermophilus (strain ATCC 27634 / DSM 579 / HB8).